Consider the following 173-residue polypeptide: Secreted RxLR effector protein RXLR-C12 (173 aa).

Positions 1-18 (MLQFATAFLAISANVVMT) are cleaved as a signal peptide. A RxLR-dEER motif is present at residues 41-55 (RRLRTHEIGTVPEER). Asn-155 carries N-linked (GlcNAc...) asparagine glycosylation.

Belongs to the RxLR effector family.

Its subcellular location is the secreted. The protein localises to the host cytoplasm. It localises to the host nucleus. Its function is as follows. Secreted effector that suppresses pattern-triggered immunity (PTI) in plant host. The sequence is that of Secreted RxLR effector protein RXLR-C12 from Plasmopara halstedii (Downy mildew of sunflower).